The primary structure comprises 2479 residues: Centrosomal protein of 290 kDa (2479 aa).

Residues 1–695 (MPPNINWKEI…IESKNAEGIF (695 aa)) form a self-association (with itself or C-terminus) region. Coiled-coil stretches lie at residues 59-565 (MKMK…ERGK), 598-664 (SLKN…MQKD), 697-931 (ASLH…VCEK), 958-1027 (SLSE…IEQA), 1071-1498 (QRAE…ILSR), 1533-1584 (HTLK…LHIL), and 1635-2452 (DSLS…SEQL). Basic and acidic residues predominate over residues 149–163 (ALRNEEAENENSKLR). The disordered stretch occupies residues 149-168 (ALRNEEAENENSKLRRENKR). Positions 696–896 (DASLHLKAQV…TVLQVNEKSL (201 aa)) are interaction with IQCB1. A self-association (with itself or N-terminus) region spans residues 1966-2479 (TTGMTVDQVL…EESPVNFPIY (514 aa)). Residues 2458–2479 (SPVAASEEFEDEEESPVNFPIY) form a disordered region.

In terms of assembly, part of the tectonic-like complex (also named B9 complex). Interacts with ATF4 via its N-terminal region. Associates with the BBSome complex, interacting (via N-terminus) with BBS4. Interacts with IQCB1/NPHP5; IQCB1 and CEP290/NPHP6 are proposed to form a functional NPHP5-6 module localized to the centrosome. Interacts with NPHP4; the interaction likely requires additional interactors. Interacts with ZNF423, FAM161A, CEP162, CEP162, CEP131, TALPID3, CCDC13, CC2D2A, RPGRIP1. Can self-associate (homo- or heteromeric). Interacts with CCP110; required for suppressing cilia formation. Interacts with RPGR. Associates (via C-terminus) with microtubules; association to microtubule is reduced in response to cellular stress, such as ultraviolet light (UV) radiation or heat shock, in a process that requires p38 MAP kinase signaling. Interacts with FAM161A. Interacts with PCM1. Interacts with CCDC66. Interacts with ARMC9 and CSPP1. Post-translationally, ubiquitinated. May undergo monoubiquitination; monoubiquitination is inhibited in response to cellular stress, such as ultraviolet light (UV) radiation or heat shock, but does not cause its displacement from centriolar satellites. Ubiquitous. Expressed strongly in placenta and weakly in brain.

The protein localises to the cytoplasm. It is found in the cytoskeleton. Its subcellular location is the microtubule organizing center. It localises to the centrosome. The protein resides in the centriolar satellite. The protein localises to the nucleus. It is found in the cell projection. Its subcellular location is the cilium. It localises to the cilium basal body. The protein resides in the centriole. The protein localises to the cytoplasmic vesicle. Involved in early and late steps in cilia formation. Its association with CCP110 is required for inhibition of primary cilia formation by CCP110. May play a role in early ciliogenesis in the disappearance of centriolar satellites and in the transition of primary ciliar vesicles (PCVs) to capped ciliary vesicles (CCVs). Required for the centrosomal recruitment of RAB8A and for the targeting of centriole satellite proteins to centrosomes such as of PCM1. Required for the correct localization of ciliary and phototransduction proteins in retinal photoreceptor cells; may play a role in ciliary transport processes. Required for efficient recruitment of RAB8A to primary cilium. In the ciliary transition zone is part of the tectonic-like complex which is required for tissue-specific ciliogenesis and may regulate ciliary membrane composition. Involved in regulation of the BBSome complex integrity, specifically for presence of BBS2, BBS5 and BBS8/TTC8 in the complex, and in ciliary targeting of selected BBSome cargos. May play a role in controlling entry of the BBSome complex to cilia possibly implicating IQCB1/NPHP5. Activates ATF4-mediated transcription. This Homo sapiens (Human) protein is Centrosomal protein of 290 kDa (CEP290).